A 318-amino-acid chain; its full sequence is MKSLNIIFAGTPDFAAQHLQAILNSQHNVIAVYTQPDKPAGRGKKLQASPVKQLAEQNNIPVYQPKSLRKEEAQSELKALNADVMVVVAYGLILPKAVLDAPRLGCLNVHGSILPRWRGAAPIQRSIWAGDVQTGVTIMQMDEGLDTGDMLHKVYCDILPTETSTSLYNKLAELAPSALIDVLDNLENGKFIAEKQDGSQSNYAEKLSKEEAQLNWSLSAMQLERNIRAFNPWPIAYFSTEDKDGNAHTLKVYQAKVLPHQDKPAGTILSADKNGIQIATVDGVLNLLQLQSAGKKPMSAQDLLNGRAEWFTIGKVLA.

112 to 115 lines the (6S)-5,6,7,8-tetrahydrofolate pocket; the sequence is SILP.

The protein belongs to the Fmt family.

It carries out the reaction L-methionyl-tRNA(fMet) + (6R)-10-formyltetrahydrofolate = N-formyl-L-methionyl-tRNA(fMet) + (6S)-5,6,7,8-tetrahydrofolate + H(+). Functionally, attaches a formyl group to the free amino group of methionyl-tRNA(fMet). The formyl group appears to play a dual role in the initiator identity of N-formylmethionyl-tRNA by promoting its recognition by IF2 and preventing the misappropriation of this tRNA by the elongation apparatus. This chain is Methionyl-tRNA formyltransferase, found in Haemophilus influenzae (strain ATCC 51907 / DSM 11121 / KW20 / Rd).